Reading from the N-terminus, the 294-residue chain is Cytidine deaminase (294 aa).

CMP/dCMP-type deaminase domains are found at residues 48-168 (DEDA…FGPK) and 186-294 (LTGD…VLLG). Residue 89–91 (NME) participates in substrate binding. Histidine 102 provides a ligand contact to Zn(2+). Glutamate 104 acts as the Proton donor in catalysis. Zn(2+)-binding residues include cysteine 129 and cysteine 132.

Belongs to the cytidine and deoxycytidylate deaminase family. In terms of assembly, homodimer. It depends on Zn(2+) as a cofactor.

It carries out the reaction cytidine + H2O + H(+) = uridine + NH4(+). The catalysed reaction is 2'-deoxycytidine + H2O + H(+) = 2'-deoxyuridine + NH4(+). This enzyme scavenges exogenous and endogenous cytidine and 2'-deoxycytidine for UMP synthesis. This is Cytidine deaminase from Escherichia fergusonii (strain ATCC 35469 / DSM 13698 / CCUG 18766 / IAM 14443 / JCM 21226 / LMG 7866 / NBRC 102419 / NCTC 12128 / CDC 0568-73).